The primary structure comprises 280 residues: Putative transcription factor kapC (280 aa).

The interval 1 to 102 is disordered; that stretch reads MQPALAPHPS…GKRPLSTSKR (102 aa). The span at 39–49 shows a compositional bias: pro residues; the sequence is PQPPAPQPPHM. Residues 79–89 show a composition bias toward polar residues; that stretch reads TQPDVTGQETP. In terms of domain architecture, bZIP spans 96 to 159; sequence PLSTSKRAAQ…EYIINLQSRL (64 aa). The interval 97–120 is basic motif; sequence LSTSKRAAQNRAAQRAFRQRKEAH. The interval 124–155 is leucine-zipper; sequence LEGKVKAYESMGEAIKALQAENYQLREYIINL. The tract at residues 169 to 280 is disordered; that stretch reads LPGNIDLSQP…EQTHGLPLIS (112 aa). Pro residues predominate over residues 197 to 206; sequence APPPTAPQQP.

It belongs to the bZIP family.

It localises to the nucleus. In terms of biological role, putative transcription factor. This chain is Putative transcription factor kapC (kapC), found in Aspergillus fumigatus (strain ATCC MYA-4609 / CBS 101355 / FGSC A1100 / Af293) (Neosartorya fumigata).